The chain runs to 341 residues: UPF0324 membrane protein SMU_2059c (341 aa).

The next 11 membrane-spanning stretches (helical) occupy residues 7-24 (KLSGLVLCFLIALPAWFL), 28-47 (FPLVGAPVFAIFLGMLLAIF), 68-85 (FAVVLLGFGLNLSQVLTV), 90-107 (LPIIVATISSSLLLAFLL), 120-142 (LVGVGSSICGGSAIAATAPVIQA), 147-169 (IAQSISVIFLFNILAALIFPTLG), 178-200 (GFALFAGTAVNDTSSVTATAAAW), 211-233 (GATIVKLTRTLAIIPITLGLSFY), 254-276 (VFPMFILYFILASIITTILTALG), 291-310 (FCIVMAMGAIGLNTNIVKLV), and 317-339 (IVLGASCWIVITLVSLGMQHLLG).

Belongs to the UPF0324 family.

The protein localises to the cell membrane. This chain is UPF0324 membrane protein SMU_2059c, found in Streptococcus mutans serotype c (strain ATCC 700610 / UA159).